The following is a 393-amino-acid chain: Probable acetyl-CoA acyltransferase (393 aa).

Residue C88 is the Acyl-thioester intermediate of the active site. Residues H349 and C378 each act as proton acceptor in the active site.

The protein belongs to the thiolase-like superfamily. Thiolase family.

It is found in the cytoplasm. The enzyme catalyses 2 acetyl-CoA = acetoacetyl-CoA + CoA. This is Probable acetyl-CoA acyltransferase from Staphylococcus aureus (strain Mu50 / ATCC 700699).